A 265-amino-acid chain; its full sequence is Tryptophan synthase alpha chain (265 aa).

Catalysis depends on proton acceptor residues glutamate 47 and aspartate 58.

It belongs to the TrpA family. As to quaternary structure, tetramer of two alpha and two beta chains.

It catalyses the reaction (1S,2R)-1-C-(indol-3-yl)glycerol 3-phosphate + L-serine = D-glyceraldehyde 3-phosphate + L-tryptophan + H2O. Its pathway is amino-acid biosynthesis; L-tryptophan biosynthesis; L-tryptophan from chorismate: step 5/5. Functionally, the alpha subunit is responsible for the aldol cleavage of indoleglycerol phosphate to indole and glyceraldehyde 3-phosphate. The sequence is that of Tryptophan synthase alpha chain from Methanoregula boonei (strain DSM 21154 / JCM 14090 / 6A8).